A 314-amino-acid chain; its full sequence is Atrochrysone carboxyl ACP thioesterase AgnL7 (314 aa).

Residues H103, H105, D107, and H108 each coordinate Zn(2+). Catalysis depends on D107, which acts as the Proton donor/acceptor.

The protein belongs to the metallo-beta-lactamase superfamily. Requires Zn(2+) as cofactor.

It carries out the reaction atrochrysone carboxyl-[ACP] + H2O = atrochrysone carboxylate + holo-[ACP] + H(+). The protein operates within secondary metabolite biosynthesis. Atrochrysone carboxyl ACP thioesterase; part of the gene cluster that mediates the biosynthesis of agnestins, dihydroxy-xanthone metabolites. The pathway begins with the assembly and cyclization of atrochrysone thioester by the non-reducing polyketide synthase Agnpks1. The atrochrysone carboxyl ACP thioesterase AgnL7 then breaks the thioester bond and releases the atrochrysone carboxylic acid as the first enzyme-free intermediate. The decarboxylase AgnL1 then catalyzes the concerted decarboxylation-elimination required to convert atochrysone carboxylic acid into emodin anthrone, which is further oxidized to emodin by the anthrone oxygenase AgnL2. Emodin then undergoes reduction catalyzed by the oxidoreductase AgnL4 to yield the dihydroquinone tautomer which is the substrate for reduction by the short chain dehydrogenase AgnL6 reduction to produce hydroxyketone, followed by AgnL8 dehydration and likely spontaneous autoxidation to chrysophanol. Baeyer-Villiger oxidation by the oxidase AgnL3 leads to monodictyphenone via cleavage of the C-10/C-10a bond of chrysophanol. Alternative cleavage at the C-4a/C-10 bond of chrysophanol also leads to the formation some cephalone F. Further conversion to agnestins A and B, requires reduction to dihydro-monodictyphenone, oxidation to agnestin C probably via an epoxide, and rearrangement to either agnestin A or agnestin B directly, although agnestin A or agnestin B can also interconvert. Within the cluster, AgnR1 is the only unassigned oxidoreductase present which could be involved in this conversion. However, AgnR1 seems not to be involved in this step, and thus genes involved in the proposed oxidation/reduction may be located elsewhere on the genome. Further agnestin A derivatives are probably formed by spontaneous decarboxylations, dehydrations and methanolysis reactions. This chain is Atrochrysone carboxyl ACP thioesterase AgnL7, found in Paecilomyces divaricatus (Penicillium divaricatum).